The chain runs to 158 residues: MSSKEQEAQKGKQGWITPAVIPPEEWGTFRYRGKTLEELLNLPMDEFIKLLPARQRRSLKRGLKPEHRKLLEKIRKAKRLAAQGKKVTIKTHSRDMIILPEMVGLTIHVYNGITYIPVFISPWHIGHYLGEFALTTKVVQHGEPGLKATRSSLHIAAK.

Belongs to the universal ribosomal protein uS19 family.

Functionally, protein S19 forms a complex with S13 that binds strongly to the 16S ribosomal RNA. This Pyrobaculum neutrophilum (strain DSM 2338 / JCM 9278 / NBRC 100436 / V24Sta) (Thermoproteus neutrophilus) protein is Small ribosomal subunit protein uS19.